We begin with the raw amino-acid sequence, 307 residues long: 4-diphosphocytidyl-2-C-methyl-D-erythritol kinase (307 aa).

K14 is a catalytic residue. 107–117 (PVAGGMAGGSA) provides a ligand contact to ATP. D149 is a catalytic residue.

This sequence belongs to the GHMP kinase family. IspE subfamily.

It carries out the reaction 4-CDP-2-C-methyl-D-erythritol + ATP = 4-CDP-2-C-methyl-D-erythritol 2-phosphate + ADP + H(+). It functions in the pathway isoprenoid biosynthesis; isopentenyl diphosphate biosynthesis via DXP pathway; isopentenyl diphosphate from 1-deoxy-D-xylulose 5-phosphate: step 3/6. Its function is as follows. Catalyzes the phosphorylation of the position 2 hydroxy group of 4-diphosphocytidyl-2C-methyl-D-erythritol. This Thermobifida fusca (strain YX) protein is 4-diphosphocytidyl-2-C-methyl-D-erythritol kinase.